The chain runs to 118 residues: Large ribosomal subunit protein bL20 (118 aa).

Belongs to the bacterial ribosomal protein bL20 family.

Functionally, binds directly to 23S ribosomal RNA and is necessary for the in vitro assembly process of the 50S ribosomal subunit. It is not involved in the protein synthesizing functions of that subunit. This is Large ribosomal subunit protein bL20 from Staphylococcus aureus (strain Mu3 / ATCC 700698).